A 462-amino-acid chain; its full sequence is Argininosuccinate lyase (462 aa).

The protein belongs to the lyase 1 family. Argininosuccinate lyase subfamily.

It is found in the cytoplasm. It catalyses the reaction 2-(N(omega)-L-arginino)succinate = fumarate + L-arginine. The protein operates within amino-acid biosynthesis; L-arginine biosynthesis; L-arginine from L-ornithine and carbamoyl phosphate: step 3/3. The protein is Argininosuccinate lyase of Streptococcus agalactiae serotype III (strain NEM316).